A 322-amino-acid polypeptide reads, in one-letter code: MKNQYRVLLYYKYVHIDNPEQFAEDHLKFCKDLGLKGRILVAGEGINGTVSGTVEQTDRYMSEMKSDPRFEDMVFKIDESEGHAFKKMHVRHRDELVTLRLEDDIDPNELTGKYLEPKEFYEAMQQEDTIVVDARNDYEYDLGHFRGAIRPDIKAFRELPEWIRDNKEKLEGKKILTYCTGGIRCEKFSGWLKKEGFEDVSQLHGGIVTYGKDPEVQGELWDGKCYVFDERISVPVNQKEHVIVGKDYFTGEPCERYVNCANPECNKQIICSEENEHRYLRGCTHECRVHPRNLYVKEHGLSEEEVQERLEKLKEEEHAAQS.

The region spanning Gln-125–Glu-219 is the Rhodanese domain. Cys-179 serves as the catalytic Cysteine persulfide intermediate.

It belongs to the TrhO family.

It catalyses the reaction uridine(34) in tRNA + AH2 + O2 = 5-hydroxyuridine(34) in tRNA + A + H2O. Functionally, catalyzes oxygen-dependent 5-hydroxyuridine (ho5U) modification at position 34 in tRNAs. This Bacillus licheniformis (strain ATCC 14580 / DSM 13 / JCM 2505 / CCUG 7422 / NBRC 12200 / NCIMB 9375 / NCTC 10341 / NRRL NRS-1264 / Gibson 46) protein is tRNA uridine(34) hydroxylase.